The primary structure comprises 495 residues: Glutamyl-tRNA(Gln) amidotransferase subunit A (495 aa).

Catalysis depends on charge relay system residues lysine 75 and serine 150. The active-site Acyl-ester intermediate is serine 174.

This sequence belongs to the amidase family. GatA subfamily. In terms of assembly, heterotrimer of A, B and C subunits.

It catalyses the reaction L-glutamyl-tRNA(Gln) + L-glutamine + ATP + H2O = L-glutaminyl-tRNA(Gln) + L-glutamate + ADP + phosphate + H(+). Its function is as follows. Allows the formation of correctly charged Gln-tRNA(Gln) through the transamidation of misacylated Glu-tRNA(Gln) in organisms which lack glutaminyl-tRNA synthetase. The reaction takes place in the presence of glutamine and ATP through an activated gamma-phospho-Glu-tRNA(Gln). The chain is Glutamyl-tRNA(Gln) amidotransferase subunit A from Paraburkholderia phytofirmans (strain DSM 17436 / LMG 22146 / PsJN) (Burkholderia phytofirmans).